The sequence spans 66 residues: Cytochrome b-c1 complex subunit 9, mitochondrial (66 aa).

Over 2–17 (SFSSLYKTFFKRNAVF) the chain is Mitochondrial matrix. The chain crosses the membrane as a helical span at residues 18–43 (VGTIFAGAFVFQTVFDTAITSWYENH). The Mitochondrial intermembrane portion of the chain corresponds to 44–66 (NKGKLWKDVKARIAAGDGDDDDE).

It belongs to the UQCR10/QCR9 family. In terms of assembly, component of the ubiquinol-cytochrome c oxidoreductase (cytochrome b-c1 complex, complex III, CIII), a multisubunit enzyme composed of 10 subunits. The complex is composed of 3 respiratory subunits cytochrome b (COB), cytochrome c1 (CYT1) and Rieske protein (RIP1), 2 core protein subunits COR1 and QCR2, and 5 low-molecular weight protein subunits QCR6, QCR7, QCR8, QCR9 and QCR10. The complex exists as an obligatory dimer and forms supercomplexes (SCs) in the inner mitochondrial membrane with a monomer or a dimer of cytochrome c oxidase (complex IV, CIV), resulting in 2 different assemblies (supercomplexes III(2)IV and III(2)IV(2)). Interacts with the transmembrane segment of RIP1.

Its subcellular location is the mitochondrion inner membrane. Its function is as follows. Component of the ubiquinol-cytochrome c oxidoreductase, a multisubunit transmembrane complex that is part of the mitochondrial electron transport chain which drives oxidative phosphorylation. The respiratory chain contains 3 multisubunit complexes succinate dehydrogenase (complex II, CII), ubiquinol-cytochrome c oxidoreductase (cytochrome b-c1 complex, complex III, CIII) and cytochrome c oxidase (complex IV, CIV), that cooperate to transfer electrons derived from NADH and succinate to molecular oxygen, creating an electrochemical gradient over the inner membrane that drives transmembrane transport and the ATP synthase. The cytochrome b-c1 complex catalyzes electron transfer from ubiquinol to cytochrome c, linking this redox reaction to translocation of protons across the mitochondrial inner membrane, with protons being carried across the membrane as hydrogens on the quinol. In the process called Q cycle, 2 protons are consumed from the matrix, 4 protons are released into the intermembrane space and 2 electrons are passed to cytochrome c. The protein is Cytochrome b-c1 complex subunit 9, mitochondrial (QCR9) of Saccharomyces cerevisiae (strain ATCC 204508 / S288c) (Baker's yeast).